The following is a 103-amino-acid chain: Small ribosomal subunit protein uS10 (103 aa).

Belongs to the universal ribosomal protein uS10 family. Part of the 30S ribosomal subunit.

Involved in the binding of tRNA to the ribosomes. This Psychromonas ingrahamii (strain DSM 17664 / CCUG 51855 / 37) protein is Small ribosomal subunit protein uS10.